Reading from the N-terminus, the 236-residue chain is Syntaxin-8 (236 aa).

At 1-215 (MAPDPWFSTY…LVDRKSTSCG (215 aa)) the chain is on the cytoplasmic side. Positions 42–65 (LTIRTLLKNLKVKIDLLKDLLLRA) form a coiled coil. One can recognise a t-SNARE coiled-coil homology domain in the interval 145 to 207 (QKIIQEQDAG…RTEARRVTLV (63 aa)). Phosphoserine is present on Ser160. A helical; Anchor for type IV membrane protein membrane pass occupies residues 216 to 232 (MIMVILLLLVAIVVVAV). The Vesicular segment spans residues 233-236 (WPTN).

Belongs to the syntaxin family. In terms of assembly, forms a SNARE complex with STX7, VTI1B and VAMP8 which functions in the homotypic fusion of late endosomes. Part of the SNARE core complex containing STX7, VAMP8 and VTI1B. Interacts with VAMP8. Interacts with HECTD3. Interacts with TPC1. Ubiquitinated by HECTD3.

Its subcellular location is the membrane. Functionally, vesicle trafficking protein that functions in the early secretory pathway, possibly by mediating retrograde transport from cis-Golgi membranes to the ER. This Mus musculus (Mouse) protein is Syntaxin-8 (Stx8).